Reading from the N-terminus, the 188-residue chain is GTPase KRas (188 aa).

An N-acetylmethionine modification is found at methionine 1. N-acetylthreonine; in GTPase KRas, N-terminally processed is present on threonine 2. Residues glycine 10 to alanine 18, valine 29 to threonine 35, and alanine 59 to glycine 60 each bind GTP. An Effector region motif is present at residues tyrosine 32–tyrosine 40. N6-acetyllysine is present on lysine 104. A GTP-binding site is contributed by asparagine 116–aspartate 119. The interval histidine 166–cysteine 185 is hypervariable region. The segment at lysine 167–methionine 188 is disordered. At cysteine 185 the chain carries Cysteine methyl ester. A lipid anchor (S-farnesyl cysteine) is attached at cysteine 185. A propeptide spans isoleucine 186–methionine 188 (removed in mature form).

The protein belongs to the small GTPase superfamily. Ras family. As to quaternary structure, interacts with PHLPP. Interacts (active GTP-bound form preferentially) with RGS14. Interacts (when farnesylated) with PDE6D; this promotes dissociation from the cell membrane. Interacts with SOS1. Interacts (when farnesylated) with GPR31. Interacts with RAP1GDS1. Interacts (active GTP-bound form) with both SHOC2 and PP1c (all isoforms) to form a tertiary complex; SHOC2 and PP1c preferably bind M-Ras/MRAS, but they also bind K-Ras/KRAS, N-Ras/NRAS and H-Ras/HRAS. Interacts (GTP-bound form) with MAPKAP1/SIN1; inhibiting K-Ras/KRAS activity. Post-translationally, acetylation at Lys-104 prevents interaction with guanine nucleotide exchange factors (GEFs).

It localises to the cell membrane. It is found in the cytoplasm. Its subcellular location is the cytosol. The enzyme catalyses GTP + H2O = GDP + phosphate + H(+). With respect to regulation, alternates between an inactive form bound to GDP and an active form bound to GTP. Activated by a guanine nucleotide-exchange factor (GEF) and inactivated by a GTPase-activating protein (GAP). Interaction with SOS1 promotes exchange of bound GDP to GTP. In terms of biological role, ras proteins bind GDP/GTP and possess intrinsic GTPase activity. Plays an important role in the regulation of cell proliferation. Plays a role in promoting oncogenic events by inducing transcriptional silencing of tumor suppressor genes (TSGs) in colorectal cancer (CRC) cells in a ZNF304-dependent manner. This chain is GTPase KRas (KRAS), found in Monodelphis domestica (Gray short-tailed opossum).